Consider the following 253-residue polypeptide: MVQVEKGHVAVVFLNDPERRNPLSPEMALSLLQALDDLEADPGVRAVVLTGRGKAFSAGADLAFLERVTELGAEENYRHSLSLMRLFHRVYTYPKPTVAAVNGPAVAGGAGLALACDLVVMDEEARLGYTEVKIGFVAALVSVILVRAVGEKAAKDLLLTGRLVEAREAKALGLVNRIAPPGKALEEAKALAEEVAKNAPTSLRLTKELLLALPGMGLEDGFRLAALANAWVRETGDLKEGIRAFFEKRPPRF.

Glu-131 is a catalytic residue.

This sequence belongs to the enoyl-CoA hydratase/isomerase family. In terms of assembly, homohexamer; dimer of trimers.

The catalysed reaction is a (3S)-3-hydroxyacyl-CoA = a (2E)-enoyl-CoA + H2O. This chain is Putative enoyl-CoA hydratase, found in Thermus thermophilus (strain ATCC 27634 / DSM 579 / HB8).